Here is a 196-residue protein sequence, read N- to C-terminus: Pyridoxal 5'-phosphate synthase subunit PdxT (196 aa).

47–49 lines the L-glutamine pocket; the sequence is GES. C79 (nucleophile) is an active-site residue. Residues R106 and 134-135 contribute to the L-glutamine site; that span reads IR. Catalysis depends on charge relay system residues H170 and E172.

It belongs to the glutaminase PdxT/SNO family. In terms of assembly, in the presence of PdxS, forms a dodecamer of heterodimers. Only shows activity in the heterodimer.

It carries out the reaction aldehydo-D-ribose 5-phosphate + D-glyceraldehyde 3-phosphate + L-glutamine = pyridoxal 5'-phosphate + L-glutamate + phosphate + 3 H2O + H(+). The enzyme catalyses L-glutamine + H2O = L-glutamate + NH4(+). The protein operates within cofactor biosynthesis; pyridoxal 5'-phosphate biosynthesis. Catalyzes the hydrolysis of glutamine to glutamate and ammonia as part of the biosynthesis of pyridoxal 5'-phosphate. The resulting ammonia molecule is channeled to the active site of PdxS. The sequence is that of Pyridoxal 5'-phosphate synthase subunit PdxT from Halalkalibacterium halodurans (strain ATCC BAA-125 / DSM 18197 / FERM 7344 / JCM 9153 / C-125) (Bacillus halodurans).